The following is a 223-amino-acid chain: Retbindin (223 aa).

An N-terminal signal peptide occupies residues 1–30 (MANRGHTQPRALAWALGLTLVWILLGACGG). Disulfide bonds link cysteine 73–cysteine 143, cysteine 80–cysteine 120, cysteine 113–cysteine 157, and cysteine 126–cysteine 139.

Belongs to the folate receptor family. In terms of processing, not N-glycosylated.

The protein resides in the secreted. The protein localises to the extracellular space. It localises to the extracellular matrix. It is found in the interphotoreceptor matrix. Its subcellular location is the cell membrane. Functionally, riboflavin-binding protein which might have a role in retinal flavin transport. This Canis lupus familiaris (Dog) protein is Retbindin (RTBDN).